The primary structure comprises 580 residues: Alpha-glucosidase (580 aa).

The N-terminal stretch at 1–19 (MRPLGALSLFALLATTVSG) is a signal peptide. 2 N-linked (GlcNAc...) asparagine glycosylation sites follow: Asn102 and Asn127. Asp224 acts as the Nucleophile in catalysis. Glu290 acts as the Proton donor in catalysis. N-linked (GlcNAc...) asparagine glycosylation occurs at Asn501. The chain crosses the membrane as a helical span at residues 560–580 (AAAINLSIGLLLAIMARYIFV).

It belongs to the glycosyl hydrolase 13 family. (Microbial infection) Binds to L.sphaericus BinB subunit of the binary toxin BinAB. In 4th-instar larvae produced in the brush border membranes of the gastric caeca and the posterior stomach cells (at protein level).

It is found in the membrane. The enzyme catalyses Hydrolysis of terminal, non-reducing (1-&gt;4)-linked alpha-D-glucose residues with release of alpha-D-glucose.. Probably an alpha-glucosidase, it has no alpha-amylase function. Functionally, (Microbial infection) Serves as the larval receptor for Lysinibacillus sphaericus BinB toxin. The protein is Alpha-glucosidase of Culex pipiens (House mosquito).